A 442-amino-acid polypeptide reads, in one-letter code: Putative mannan endo-1,6-alpha-mannosidase C970.02 (442 aa).

Residues 1–19 (MSLTIFISLATILFSFAEA) form the signal peptide. N-linked (GlcNAc...) asparagine glycosylation is found at asparagine 25, asparagine 82, asparagine 107, asparagine 131, asparagine 201, asparagine 236, asparagine 261, asparagine 264, asparagine 277, and asparagine 361.

It belongs to the glycosyl hydrolase 76 family.

It carries out the reaction Random hydrolysis of (1-&gt;6)-alpha-D-mannosidic linkages in unbranched (1-&gt;6)-mannans.. This is Putative mannan endo-1,6-alpha-mannosidase C970.02 from Schizosaccharomyces pombe (strain 972 / ATCC 24843) (Fission yeast).